Reading from the N-terminus, the 642-residue chain is 1,4-alpha-glucan branching enzyme GlgB (642 aa).

The Nucleophile role is filled by Asp304. Glu355 functions as the Proton donor in the catalytic mechanism.

Belongs to the glycosyl hydrolase 13 family. GlgB subfamily. In terms of assembly, monomer.

The catalysed reaction is Transfers a segment of a (1-&gt;4)-alpha-D-glucan chain to a primary hydroxy group in a similar glucan chain.. Its pathway is glycan biosynthesis; glycogen biosynthesis. Catalyzes the formation of the alpha-1,6-glucosidic linkages in glycogen by scission of a 1,4-alpha-linked oligosaccharide from growing alpha-1,4-glucan chains and the subsequent attachment of the oligosaccharide to the alpha-1,6 position. In Streptococcus pneumoniae serotype 2 (strain D39 / NCTC 7466), this protein is 1,4-alpha-glucan branching enzyme GlgB.